Reading from the N-terminus, the 568-residue chain is MFS-type efflux transporter phmH (568 aa).

Positions 1–11 (MVSGTDTTEVG) are enriched in polar residues. The tract at residues 1 to 39 (MVSGTDTTEVGATTKAPPSEGTEGILDDHSSNSQPQAEK) is disordered. 7 helical membrane passes run 45-65 (YPLSFWLAFLGLCCTGLVSAL), 101-121 (YVMIGATIIFILGSGLCGGSS), 134-154 (GIGAGGINMLIDMIICDLVPM), 161-181 (IGLLFLFVSLGATIGPFVGGI), 199-219 (IFYINLPFGGVALLLLILFLH), 237-257 (VIGNSILIGATFAILYALTYG), and 268-288 (IAAPLTIGLVGLVAAFFWEMS). An N-linked (GlcNAc...) asparagine glycan is attached at asparagine 303. The next 6 membrane-spanning stretches (helical) occupy residues 307–327 (AAAFFISFMCMLLAFWINFFY), 344–364 (VYTLPRAIAFPLFAAVGGAIV), 372–392 (TVHLVSTGIMPLVMGLSSILD), 399–419 (EWVIWQLLFGVSGGMMISTTL), 437–457 (TWSFVRSLGTIWGLSIPAAIF), and 515–535 (IGIVFGGVTFLSVFFEKEIHL). Residue asparagine 563 is glycosylated (N-linked (GlcNAc...) asparagine).

It belongs to the major facilitator superfamily.

Its subcellular location is the cell membrane. Its function is as follows. MFS-type efflux transporter; part of the gene cluster that mediates the biosynthesis of thethe mycotoxins phomacins, leucine-derived cytochalasans with potent actin polymerization-inhibitory activities and monocot-specific antigerminative activities. PhmH might be involved in the excretion of phomacins. The chain is MFS-type efflux transporter phmH from Phaeosphaeria nodorum (strain SN15 / ATCC MYA-4574 / FGSC 10173) (Glume blotch fungus).